Reading from the N-terminus, the 252-residue chain is uncharacterized protein (252 aa).

Positions 106 to 140 (IQSLHARRDHLDNAVEQLKSQLSRLDSSVAILKSQ) form a coiled coil.

This is an uncharacterized protein from Caenorhabditis elegans.